The primary structure comprises 61 residues: MFTLKKTLLLLFFLGTINLSLCEEERNAEEERRDGDDEMDVEVKKRFISGLIGGLMKALGK.

Positions 1-22 (MFTLKKTLLLLFFLGTINLSLC) are cleaved as a signal peptide. The propeptide at 23–44 (EEERNAEEERRDGDDEMDVEVK) is removed in mature form. Residue Lys-61 is modified to Lysine amide.

It belongs to the frog skin active peptide (FSAP) family. Temporin subfamily. Expressed by the skin glands.

The protein resides in the secreted. Functionally, antimicrobial peptide. Active against some Gram-positive and Gram-negative bacterial strains. Active against fungus C.glabrata 090902 but not against C.albicans ATCC 12231. Shows weak hemolytic activity against human erythrocytes. The protein is Temporin-SN3 of Sylvirana spinulosa (Fine-spined frog).